We begin with the raw amino-acid sequence, 428 residues long: Elongation factor 1-alpha (428 aa).

Residues 5 to 217 (KPHVNIVFIG…DQIPEPEKPI (213 aa)) enclose the tr-type G domain. The interval 14 to 21 (GHVDHGKS) is G1. 14 to 21 (GHVDHGKS) is a GTP binding site. Ser-21 contacts Mg(2+). A G2 region spans residues 68 to 72 (GITID). Residues 89-92 (DAPG) form a G3 region. GTP is bound by residues 89-93 (DAPGH) and 144-147 (NKMD). The tract at residues 144-147 (NKMD) is G4. Residues 181-183 (SAW) form a G5 region.

Belongs to the TRAFAC class translation factor GTPase superfamily. Classic translation factor GTPase family. EF-Tu/EF-1A subfamily.

Its subcellular location is the cytoplasm. The catalysed reaction is GTP + H2O = GDP + phosphate + H(+). Its function is as follows. GTP hydrolase that promotes the GTP-dependent binding of aminoacyl-tRNA to the A-site of ribosomes during protein biosynthesis. The protein is Elongation factor 1-alpha of Pyrococcus horikoshii (strain ATCC 700860 / DSM 12428 / JCM 9974 / NBRC 100139 / OT-3).